Consider the following 112-residue polypeptide: Large ribosomal subunit protein P2-B (112 aa).

The segment at 89 to 112 (APAAADAKKEEEEEDDDMGFGLFD) is disordered.

It belongs to the eukaryotic ribosomal protein P1/P2 family. In terms of assembly, P1 and P2 exist as dimers at the large ribosomal subunit. Phosphorylated.

Plays an important role in the elongation step of protein synthesis. The protein is Large ribosomal subunit protein P2-B of Trypanosoma cruzi.